Here is an 849-residue protein sequence, read N- to C-terminus: Coiled-coil domain-containing protein 87 (849 aa).

A coiled-coil region spans residues 387–415 (RHPAAGHRLEELEKMLRNLQEEEASGQWD).

This sequence belongs to the CCDC87 family.

Its function is as follows. Plays a role in spermatogenesis, where it is important for normal sperm head morphology. Also required for the acrosome reaction and thus normal male fertility. This is Coiled-coil domain-containing protein 87 (CCDC87) from Homo sapiens (Human).